Consider the following 86-residue polypeptide: Large ribosomal subunit protein uL10 (86 aa).

This sequence belongs to the universal ribosomal protein uL10 family. Part of the ribosomal stalk of the 50S ribosomal subunit. The N-terminus interacts with L11 and the large rRNA to form the base of the stalk. The C-terminus forms an elongated spine to which L12 dimers bind in a sequential fashion forming a multimeric L10(L12)X complex.

Forms part of the ribosomal stalk, playing a central role in the interaction of the ribosome with GTP-bound translation factors. The sequence is that of Large ribosomal subunit protein uL10 (rplJ) from Serratia marcescens.